Reading from the N-terminus, the 646-residue chain is Cysteine-rich receptor-like protein kinase 37 (646 aa).

A signal peptide spans 1–26 (MGKSCVVTSSFSLLLLFLQTLKYVHA). Gnk2-homologous domains follow at residues 27–132 (GFIC…NHST) and 142–252 (TINP…LYPY). Residues 27–287 (GFICYGDFFN…RDEKSFQGSN (261 aa)) are Extracellular-facing. Residues N62, N129, N169, and N180 are each glycosylated (N-linked (GlcNAc...) asparagine). Residues 288 to 308 (IAIIVVPSVINLIIFVVLIFS) traverse the membrane as a helical segment. Over 309 to 646 (WKRKQSHTII…LTRPSLSLGH (338 aa)) the chain is Cytoplasmic. Residues 345–626 (FSLENKLGQG…LFWLERHATI (282 aa)) form the Protein kinase domain. Residues 351–359 (LGQGGFGSV) and K373 contribute to the ATP site. Y418 carries the phosphotyrosine modification. The active-site Proton acceptor is D470. S474 bears the Phosphoserine mark. T510 is modified (phosphothreonine). Y518 carries the phosphotyrosine modification.

Belongs to the protein kinase superfamily. Ser/Thr protein kinase family. CRK subfamily.

The protein localises to the membrane. It catalyses the reaction L-seryl-[protein] + ATP = O-phospho-L-seryl-[protein] + ADP + H(+). It carries out the reaction L-threonyl-[protein] + ATP = O-phospho-L-threonyl-[protein] + ADP + H(+). This chain is Cysteine-rich receptor-like protein kinase 37 (CRK37), found in Arabidopsis thaliana (Mouse-ear cress).